Reading from the N-terminus, the 66-residue chain is Ocellatin-PT1 (66 aa).

Residues 1 to 22 (MAFLKKSLFLVLFLGLVSLSIC) form the signal peptide. Residues 23-39 (DEEKRQDEDDDDDDDEE) constitute a propeptide that is removed on maturation. At Val66 the chain carries Valine amide.

Expressed by the skin glands.

The protein localises to the secreted. Functionally, has antibacterial activity against Gram-negative bacterium E.coli ATCC 25922 (MIC=300 uM) but not against S.pneumoniae ATCC 700603, S.choleraesuis ATCC 14028 or Gram-positive bacterium S.aureus ATCC 29313. Shows virtually no hemolytic activity and no cytotoxicity. This is Ocellatin-PT1 from Leptodactylus pustulatus (Ceara white-lipped frog).